We begin with the raw amino-acid sequence, 289 residues long: MPELPEVEVVRRGLQSHAVGAAIEAVEVLHPRAIRRHILGSEDLIGQLTGQTIASAERRGKYLWLVLEPAGVGLVVHLGMSGQMLVQPPTVDWEKHLRIRLALDSGADLRFVDQRTFGGWSISPLVEVDGTMLPESVAHIARDPMDAAFDLESVVKVLRGKHTEIKRAILDQTVVSGIGNIYADESLWRAKIHGNRIAESLTRPKLRELLTAAHSVMGEALDQGGTSFDALYVNVNGESGYFDRSLSAYGQENLPCPRCGAPIKREKFMNRSSFSCPRCQPTPRARRIA.

Proline 2 functions as the Schiff-base intermediate with DNA in the catalytic mechanism. The active-site Proton donor is the glutamate 3. The active-site Proton donor; for beta-elimination activity is lysine 61. 3 residues coordinate DNA: histidine 96, arginine 115, and lysine 161. The FPG-type zinc finger occupies 247 to 281; that stretch reads SAYGQENLPCPRCGAPIKREKFMNRSSFSCPRCQP. Arginine 271 (proton donor; for delta-elimination activity) is an active-site residue.

Belongs to the FPG family. In terms of assembly, monomer. Zn(2+) serves as cofactor.

The enzyme catalyses Hydrolysis of DNA containing ring-opened 7-methylguanine residues, releasing 2,6-diamino-4-hydroxy-5-(N-methyl)formamidopyrimidine.. The catalysed reaction is 2'-deoxyribonucleotide-(2'-deoxyribose 5'-phosphate)-2'-deoxyribonucleotide-DNA = a 3'-end 2'-deoxyribonucleotide-(2,3-dehydro-2,3-deoxyribose 5'-phosphate)-DNA + a 5'-end 5'-phospho-2'-deoxyribonucleoside-DNA + H(+). In terms of biological role, involved in base excision repair of DNA damaged by oxidation or by mutagenic agents. Acts as a DNA glycosylase that recognizes and removes damaged bases. Has a preference for oxidized purines, such as 7,8-dihydro-8-oxoguanine (8-oxoG). Has AP (apurinic/apyrimidinic) lyase activity and introduces nicks in the DNA strand. Cleaves the DNA backbone by beta-delta elimination to generate a single-strand break at the site of the removed base with both 3'- and 5'-phosphates. This Rhodococcus erythropolis (strain PR4 / NBRC 100887) protein is Formamidopyrimidine-DNA glycosylase.